A 156-amino-acid chain; its full sequence is Small ribosomal subunit protein uS7 (156 aa).

This sequence belongs to the universal ribosomal protein uS7 family. As to quaternary structure, part of the 30S ribosomal subunit. Contacts proteins S9 and S11.

Its function is as follows. One of the primary rRNA binding proteins, it binds directly to 16S rRNA where it nucleates assembly of the head domain of the 30S subunit. Is located at the subunit interface close to the decoding center, probably blocks exit of the E-site tRNA. The polypeptide is Small ribosomal subunit protein uS7 (Carboxydothermus hydrogenoformans (strain ATCC BAA-161 / DSM 6008 / Z-2901)).